We begin with the raw amino-acid sequence, 300 residues long: Ubiquitin thioesterase otu2 (300 aa).

Disordered regions lie at residues 23–73 and 89–141; these read RKQL…QQED and TAEK…SEKM. Basic and acidic residues predominate over residues 48-61; it reads LSQKHATERQKLDK. The segment covering 62-71 has biased composition (acidic residues); the sequence is GDEETNETQQ. Over residues 89–109 the composition is skewed to polar residues; it reads TAEKSSVQSSLNTKENTPQQP. The span at 115-141 shows a compositional bias: basic and acidic residues; the sequence is RQKERLERRKAEMKKMSEQAELESEKM. The OTU domain occupies 161 to 298; that stretch reads LVAVDIPADG…GAHYNSLLYR (138 aa).

It localises to the cytoplasm. It carries out the reaction Thiol-dependent hydrolysis of ester, thioester, amide, peptide and isopeptide bonds formed by the C-terminal Gly of ubiquitin (a 76-residue protein attached to proteins as an intracellular targeting signal).. Functionally, hydrolase that can remove conjugated ubiquitin from proteins and may therefore play an important regulatory role at the level of protein turnover by preventing degradation. This chain is Ubiquitin thioesterase otu2 (otu2), found in Schizosaccharomyces pombe (strain 972 / ATCC 24843) (Fission yeast).